We begin with the raw amino-acid sequence, 254 residues long: Type III pantothenate kinase (254 aa).

13 to 20 (MIGNTRQH) is an ATP binding site. Residues Tyr84 and 88 to 91 (GLDR) contribute to the substrate site. Asp90 functions as the Proton acceptor in the catalytic mechanism. K(+) is bound at residue Asp110. Position 113 (Thr113) interacts with ATP. Thr166 is a binding site for substrate.

Belongs to the type III pantothenate kinase family. As to quaternary structure, homodimer. NH4(+) serves as cofactor. The cofactor is K(+).

It localises to the cytoplasm. The enzyme catalyses (R)-pantothenate + ATP = (R)-4'-phosphopantothenate + ADP + H(+). It participates in cofactor biosynthesis; coenzyme A biosynthesis; CoA from (R)-pantothenate: step 1/5. Functionally, catalyzes the phosphorylation of pantothenate (Pan), the first step in CoA biosynthesis. The protein is Type III pantothenate kinase of Thermosynechococcus vestitus (strain NIES-2133 / IAM M-273 / BP-1).